The chain runs to 385 residues: Putative transport protein MT1133 (385 aa).

8 consecutive transmembrane segments (helical) span residues 7–27 (LTQK…GAYF), 32–52 (FVLI…FKWF), 66–86 (LLSA…LAIV), 159–179 (SLAG…ALLV), 218–238 (FVIA…AGFH), 241–261 (FFIF…GGIV), 263–283 (IPFG…FVLL), and 319–339 (GITM…ILIV).

The protein belongs to the autoinducer-2 exporter (AI-2E) (TC 2.A.86) family.

The protein resides in the cell membrane. This chain is Putative transport protein MT1133, found in Mycobacterium tuberculosis (strain CDC 1551 / Oshkosh).